A 387-amino-acid polypeptide reads, in one-letter code: uncharacterized protein (387 aa).

It is found in the virion. This is an uncharacterized protein from Acanthamoeba polyphaga (Amoeba).